Reading from the N-terminus, the 123-residue chain is uncharacterized protein (123 aa).

Residues 31–57 show a composition bias toward basic and acidic residues; that stretch reads KLRTEAKKSKDKERTKEKEKHESLAKE. The interval 31 to 58 is disordered; the sequence is KLRTEAKKSKDKERTKEKEKHESLAKEK. The helical transmembrane segment at 91 to 111 threads the bilayer; that stretch reads IIIFLLILLVSGLMVGIFFGI.

It is found in the membrane. This is an uncharacterized protein from Mycoplasma genitalium (strain ATCC 33530 / DSM 19775 / NCTC 10195 / G37) (Mycoplasmoides genitalium).